A 465-amino-acid chain; its full sequence is Lactaldehyde dehydrogenase (465 aa).

220 to 225 (GSVEVG) contributes to the NAD(+) binding site. Residues E240 and C274 contribute to the active site.

The protein belongs to the aldehyde dehydrogenase family. Homotetramer.

It carries out the reaction (S)-lactaldehyde + NAD(+) + H2O = (S)-lactate + NADH + 2 H(+). It functions in the pathway cofactor biosynthesis; coenzyme F420 biosynthesis. In terms of biological role, involved in F420 biosynthesis through the oxidation of lactaldehyde to lactate. In Methanococcus maripaludis (strain DSM 14266 / JCM 13030 / NBRC 101832 / S2 / LL), this protein is Lactaldehyde dehydrogenase.